We begin with the raw amino-acid sequence, 124 residues long: Small ribosomal subunit protein uS12 (124 aa).

Aspartate 90 is modified (3-methylthioaspartic acid).

The protein belongs to the universal ribosomal protein uS12 family. Part of the 30S ribosomal subunit. Contacts proteins S8 and S17. May interact with IF1 in the 30S initiation complex.

Functionally, with S4 and S5 plays an important role in translational accuracy. Interacts with and stabilizes bases of the 16S rRNA that are involved in tRNA selection in the A site and with the mRNA backbone. Located at the interface of the 30S and 50S subunits, it traverses the body of the 30S subunit contacting proteins on the other side and probably holding the rRNA structure together. The combined cluster of proteins S8, S12 and S17 appears to hold together the shoulder and platform of the 30S subunit. This chain is Small ribosomal subunit protein uS12, found in Wolbachia pipientis subsp. Culex pipiens (strain wPip).